Consider the following 97-residue polypeptide: YcgL domain-containing protein PFLU_1517 (97 aa).

The YcgL domain occupies 3 to 87 (RICSIYRSKK…AEDEYIEHLP (85 aa)).

This chain is YcgL domain-containing protein PFLU_1517, found in Pseudomonas fluorescens (strain SBW25).